Reading from the N-terminus, the 59-residue chain is Gonadotropin-releasing hormone receptor (59 aa).

Residues 1–2 (VA) are Cytoplasmic-facing. A helical transmembrane segment spans residues 3–23 (FATSFTVCWTPYYVLGIWYWF). The Extracellular portion of the chain corresponds to 24 to 37 (DPEMLNRVSDPVNH). The chain crosses the membrane as a helical span at residues 38–58 (FFFLFAFLNPCFDPLIYGYFS). A topological domain (cytoplasmic) is located at residue L59.

It belongs to the G-protein coupled receptor 1 family.

It localises to the cell membrane. Receptor for gonadotropin releasing hormone (GnRH) that mediates the action of GnRH to stimulate the secretion of the gonadotropic hormones luteinizing hormone (LH) and follicle-stimulating hormone (FSH). This receptor mediates its action by association with G-proteins that activate a phosphatidylinositol-calcium second messenger system. The sequence is that of Gonadotropin-releasing hormone receptor (GNRHR) from Macaca mulatta (Rhesus macaque).